We begin with the raw amino-acid sequence, 174 residues long: Ubiquitin-like protein 4B (174 aa).

The region spanning 1–76 is the Ubiquitin-like domain; that stretch reads MFLTVKLLLG…INVIMQPLEK (76 aa). Residues 141–156 show a composition bias toward basic and acidic residues; sequence EPHVEPAGERELEAKA. Positions 141–174 are disordered; the sequence is EPHVEPAGERELEAKARPQSSCDMEEKEEAAADQ. Positions 163-174 are enriched in acidic residues; the sequence is DMEEKEEAAADQ.

The protein localises to the cytoplasm. This Homo sapiens (Human) protein is Ubiquitin-like protein 4B (UBL4B).